The chain runs to 1339 residues: DNA-directed RNA polymerase subunit beta'' (1339 aa).

The Zn(2+) site is built by Cys226, Cys299, Cys306, and Cys309.

This sequence belongs to the RNA polymerase beta' chain family. RpoC2 subfamily. As to quaternary structure, in plastids the minimal PEP RNA polymerase catalytic core is composed of four subunits: alpha, beta, beta', and beta''. When a (nuclear-encoded) sigma factor is associated with the core the holoenzyme is formed, which can initiate transcription. Zn(2+) serves as cofactor.

The protein localises to the plastid. It is found in the chloroplast. The catalysed reaction is RNA(n) + a ribonucleoside 5'-triphosphate = RNA(n+1) + diphosphate. Its function is as follows. DNA-dependent RNA polymerase catalyzes the transcription of DNA into RNA using the four ribonucleoside triphosphates as substrates. The chain is DNA-directed RNA polymerase subunit beta'' from Cycas taitungensis (Prince sago).